Here is a 311-residue protein sequence, read N- to C-terminus: Methionyl-tRNA formyltransferase (311 aa).

109–112 serves as a coordination point for (6S)-5,6,7,8-tetrahydrofolate; sequence SLLP.

This sequence belongs to the Fmt family.

The catalysed reaction is L-methionyl-tRNA(fMet) + (6R)-10-formyltetrahydrofolate = N-formyl-L-methionyl-tRNA(fMet) + (6S)-5,6,7,8-tetrahydrofolate + H(+). In terms of biological role, attaches a formyl group to the free amino group of methionyl-tRNA(fMet). The formyl group appears to play a dual role in the initiator identity of N-formylmethionyl-tRNA by promoting its recognition by IF2 and preventing the misappropriation of this tRNA by the elongation apparatus. The protein is Methionyl-tRNA formyltransferase of Staphylococcus aureus (strain MW2).